A 387-amino-acid chain; its full sequence is Phosphoglycerate kinase (387 aa).

Substrate is bound by residues 21 to 23 (DLN), R36, 59 to 62 (HLGR), R113, and R146. ATP contacts are provided by residues K197, E314, and 340–343 (GGDT).

The protein belongs to the phosphoglycerate kinase family. As to quaternary structure, monomer.

The protein localises to the cytoplasm. It catalyses the reaction (2R)-3-phosphoglycerate + ATP = (2R)-3-phospho-glyceroyl phosphate + ADP. It functions in the pathway carbohydrate degradation; glycolysis; pyruvate from D-glyceraldehyde 3-phosphate: step 2/5. The sequence is that of Phosphoglycerate kinase from Aliivibrio salmonicida (strain LFI1238) (Vibrio salmonicida (strain LFI1238)).